Consider the following 103-residue polypeptide: Small ribosomal subunit protein uS10 (103 aa).

This sequence belongs to the universal ribosomal protein uS10 family. In terms of assembly, part of the 30S ribosomal subunit.

Involved in the binding of tRNA to the ribosomes. The polypeptide is Small ribosomal subunit protein uS10 (Shewanella baltica (strain OS223)).